The chain runs to 164 residues: Putative 4-hydroxy-4-methyl-2-oxoglutarate aldolase (164 aa).

Substrate-binding positions include 74-77 (GGNL) and R96. D97 serves as a coordination point for a divalent metal cation.

Belongs to the class II aldolase/RraA-like family. In terms of assembly, homotrimer. A divalent metal cation is required as a cofactor.

It catalyses the reaction 4-hydroxy-4-methyl-2-oxoglutarate = 2 pyruvate. The enzyme catalyses oxaloacetate + H(+) = pyruvate + CO2. In terms of biological role, catalyzes the aldol cleavage of 4-hydroxy-4-methyl-2-oxoglutarate (HMG) into 2 molecules of pyruvate. Also contains a secondary oxaloacetate (OAA) decarboxylase activity due to the common pyruvate enolate transition state formed following C-C bond cleavage in the retro-aldol and decarboxylation reactions. This is Putative 4-hydroxy-4-methyl-2-oxoglutarate aldolase from Thermus thermophilus (strain ATCC BAA-163 / DSM 7039 / HB27).